The following is a 548-amino-acid chain: Cleavage and polyadenylation specificity factor subunit 6 (548 aa).

The RRM domain maps to 81–161 (IALYIGNLTW…QKPIVTPCNK (81 aa)). The span at 169 to 180 (MQSRKTATQAGQ) shows a compositional bias: polar residues. Disordered regions lie at residues 169 to 401 (MQSR…MDVV) and 473 to 548 (LHGI…YRHR). Pro residues-rich tracts occupy residues 221 to 279 (PAGP…PPVM), 294 to 362 (PPGP…PPPG), and 373 to 384 (GPPPSDPYGRPP). 2 stretches are compositionally biased toward basic and acidic residues: residues 385–400 (PYER…DMDV) and 490–500 (RSRERDHSRSR). Positions 501–511 (EKSRRHKSRSR) are enriched in basic residues. Residues 512–548 (DRHDDYYRERSRERERHRDRERDRDRERDREREYRHR) show a composition bias toward basic and acidic residues.

This sequence belongs to the RRM CPSF6/7 family. In terms of assembly, component of the cleavage factor Im (CFIm) complex.

It localises to the nucleus. The protein localises to the nucleoplasm. It is found in the nucleus speckle. The protein resides in the cytoplasm. Its function is as follows. Component of the cleavage factor Im (CFIm) complex that functions as an activator of the pre-mRNA 3'-end cleavage and polyadenylation processing required for the maturation of pre-mRNA into functional mRNAs. CFIm contributes to the recruitment of multiprotein complexes on specific sequences on the pre-mRNA 3'-end, so called cleavage and polyadenylation signals (pA signals). Most pre-mRNAs contain multiple pA signals, resulting in alternative cleavage and polyadenylation (APA) producing mRNAs with variable 3'-end formation. The CFIm complex acts as a key regulator of cleavage and polyadenylation site choice during APA through its binding to 5'-UGUA-3' elements localized in the 3'-untranslated region (UTR) for a huge number of pre-mRNAs. Plays a role in mRNA export. The chain is Cleavage and polyadenylation specificity factor subunit 6 from Xenopus laevis (African clawed frog).